A 238-amino-acid polypeptide reads, in one-letter code: Ribonuclease PH (238 aa).

Residues Arg86 and Gly124–Arg126 each bind phosphate.

This sequence belongs to the RNase PH family. Homohexameric ring arranged as a trimer of dimers.

It carries out the reaction tRNA(n+1) + phosphate = tRNA(n) + a ribonucleoside 5'-diphosphate. In terms of biological role, phosphorolytic 3'-5' exoribonuclease that plays an important role in tRNA 3'-end maturation. Removes nucleotide residues following the 3'-CCA terminus of tRNAs; can also add nucleotides to the ends of RNA molecules by using nucleoside diphosphates as substrates, but this may not be physiologically important. Probably plays a role in initiation of 16S rRNA degradation (leading to ribosome degradation) during starvation. This Cupriavidus metallidurans (strain ATCC 43123 / DSM 2839 / NBRC 102507 / CH34) (Ralstonia metallidurans) protein is Ribonuclease PH.